A 3799-amino-acid polypeptide reads, in one-letter code: Polyketide synthase GfsE (3799 aa).

The Ketosynthase family 3 (KS3) 1 domain occupies 33-459 (HEPIAIIGMS…GTNAHAILEE (427 aa)). Module regions lie at residues 33 to 1730 (HEPI…RSSA) and 1749 to 3494 (DEAI…RTDL). Active-site for beta-ketoacyl synthase 1 activity residues include C206, H341, and H381. The interval 462 to 496 (AATGNPTEADTDQEPAASASPDRTTTLPAVPWPLS) is disordered. The region spanning 582 to 895 (FVFPGQGSQW…LGEAHAHGAD (314 aa)) is the Malonyl-CoA:ACP transacylase (MAT) 1 domain. Positions 944–1069 (HPLFGAVVEV…GVLELEARPE (126 aa)) are N-terminal hotdog fold 1. In terms of domain architecture, PKS/mFAS DH 1 spans 944–1222 (HPLFGAVVEV…SRPVAEEQLG (279 aa)). H976 (proton acceptor; for dehydratase activity 1) is an active-site residue. A C-terminal hotdog fold 1 region spans residues 1081–1222 (AEVVPVEGLY…SRPVAEEQLG (142 aa)). The Proton donor; for dehydratase activity 1 role is filled by D1142. Residues 1382–1554 (LLVTGASGVL…TSLSWGLWAE (173 aa)) enclose the Ketoreductase (KR) 1 domain. The Carrier 1 domain occupies 1652–1730 (EAERAVLELV…ALATHIRSSA (79 aa)). S1690 carries the post-translational modification O-(pantetheine 4'-phosphoryl)serine. The 426-residue stretch at 1749-2174 (DEAIAIVGMA…GTNAHVILEQ (426 aa)) folds into the Ketosynthase family 3 (KS3) 2 domain. Catalysis depends on for beta-ketoacyl synthase 2 activity residues C1921, H2056, and H2096. One can recognise a Malonyl-CoA:ACP transacylase (MAT) 2 domain in the interval 2284–2604 (FVFPGQGSQW…VSLAKVHTHG (321 aa)). The tract at residues 2656-2781 (HPLLTGVVDL…GTLAVDADHD (126 aa)) is N-terminal hotdog fold 2. The PKS/mFAS DH 2 domain occupies 2656 to 2936 (HPLLTGVVDL…TRPVTAAQFA (281 aa)). The active-site Proton acceptor; for dehydratase activity 2 is the H2688. Residues 2794 to 2936 (ADPVDLTEVY…TRPVTAAQFA (143 aa)) form a C-terminal hotdog fold 2 region. The active-site Proton donor; for dehydratase activity 2 is the D2855. A Ketoreductase (KR) 2 domain is found at 3142 to 3314 (LLVTGASGVL…TALSWGLWAE (173 aa)). The Carrier 2 domain occupies 3419-3494 (AALLDLVGAQ…ALAAQLRTDL (76 aa)). S3454 is modified (O-(pantetheine 4'-phosphoryl)serine).

It depends on pantetheine 4'-phosphate as a cofactor.

Its pathway is antibiotic biosynthesis. Its function is as follows. Fifth protein in the synthesis of the 16-membered macrolide antibiotics FD-891 and FD-892. Composed of 2 modules. Modifies the product of GfsD by multiple rounds of addition of methylmalonyl-CoA and other modifications to help generate the final products. This chain is Polyketide synthase GfsE, found in Streptomyces halstedii.